The following is a 385-amino-acid chain: 8-amino-7-oxononanoate synthase (385 aa).

Residue Arg21 participates in substrate binding. 108 to 109 (GF) is a pyridoxal 5'-phosphate binding site. His133 contributes to the substrate binding site. 3 residues coordinate pyridoxal 5'-phosphate: Ser179, His207, and Thr233. Lys236 bears the N6-(pyridoxal phosphate)lysine mark. Residue Thr352 participates in substrate binding.

It belongs to the class-II pyridoxal-phosphate-dependent aminotransferase family. BioF subfamily. Homodimer. The cofactor is pyridoxal 5'-phosphate.

It carries out the reaction 6-carboxyhexanoyl-[ACP] + L-alanine + H(+) = (8S)-8-amino-7-oxononanoate + holo-[ACP] + CO2. It participates in cofactor biosynthesis; biotin biosynthesis. Catalyzes the decarboxylative condensation of pimeloyl-[acyl-carrier protein] and L-alanine to produce 8-amino-7-oxononanoate (AON), [acyl-carrier protein], and carbon dioxide. This is 8-amino-7-oxononanoate synthase from Salmonella paratyphi B (strain ATCC BAA-1250 / SPB7).